A 315-amino-acid polypeptide reads, in one-letter code: tRNA dimethylallyltransferase (315 aa).

ATP is bound at residue 13–20 (GPTASGKT). Position 15-20 (15-20 (TASGKT)) interacts with substrate. Interaction with substrate tRNA regions lie at residues 38–41 (DSAL), 162–166 (QRIQR), and 245–250 (RCVGYR).

Belongs to the IPP transferase family. Monomer. It depends on Mg(2+) as a cofactor.

The enzyme catalyses adenosine(37) in tRNA + dimethylallyl diphosphate = N(6)-dimethylallyladenosine(37) in tRNA + diphosphate. Its function is as follows. Catalyzes the transfer of a dimethylallyl group onto the adenine at position 37 in tRNAs that read codons beginning with uridine, leading to the formation of N6-(dimethylallyl)adenosine (i(6)A). The chain is tRNA dimethylallyltransferase from Methylobacillus flagellatus (strain ATCC 51484 / DSM 6875 / VKM B-1610 / KT).